The primary structure comprises 162 residues: Interleukin-15 (162 aa).

A signal peptide spans M1–A29. A propeptide spanning residues G30 to A48 is cleaved from the precursor. Intrachain disulfides connect C83–C133 and C90–C136. Residues N104, N108, and N119 are each glycosylated (N-linked (GlcNAc...) asparagine).

Belongs to the IL-15/IL-21 family.

The protein localises to the secreted. Cytokine that plays a major role in the development of inflammatory and protective immune responses to microbial invaders and parasites by modulating immune cells of both the innate and adaptive immune systems. Stimulates the proliferation and activation of natural killer cells, T-cells and B-cells and promotes the secretion of several cytokines. In monocytes, induces the production of IL8 and monocyte chemotactic protein 1/CCL2, two chemokines that attract neutrophils and monocytes respectively to sites of infection. Unlike most cytokines, which are secreted in soluble form, IL15 is expressed in association with its high affinity IL15RA on the surface of IL15-producing cells and delivers signals to target cells that express IL2RB and IL2RG receptor subunits. Binding to its receptor triggers the phosphorylation of JAK1 and JAK3 and the recruitment and subsequent phosphorylation of signal transducer and activator of transcription-3/STAT3 and STAT5. In mast cells, induces the rapid tyrosine phosphorylation of STAT6 and thereby controls mast cell survival and release of cytokines such as IL4. The polypeptide is Interleukin-15 (Il15) (Mus musculus (Mouse)).